Here is a 339-residue protein sequence, read N- to C-terminus: MVHGRLCNRDGWILTAMVVTEFSNVGVNTLVKAATSKGLSPFVVLVYSYTFGSLLLLPLTFFSFRSRSLPPLTFSILCNMGILGLIASAFQILGYNGIKYSSPTLSSAMSNVNPAFTFILAVVFRMENISLGKKSSVAKVLGTILSIIGALVVTLYHGPMLMSSHSDWIIGGGLLALQYILVSVSYLVMAHTMGRYPSAVVVTLVHNVCIAVVCAFVSLLAEKDNPKAWVIRFDITLITVVATGILNSGYYVIHTWAVSHKGPVYLSMFKPLSILIAAVSTFIFLGESLYLGSVMGGILISIGFYMVLWGKAKEDKVDIIGAIESSPSHNAPLLDNFKS.

10 helical membrane-spanning segments follow: residues 11–31 (GWIL…NTLV), 42–62 (FVVL…LTFF), 74–94 (FSIL…QILG), 104–124 (TLSS…AVVF), 140–160 (VLGT…HGPM), 168–188 (WIIG…SYLV), 200–220 (VVVT…VSLL), 233–253 (FDIT…YYVI), 266–286 (LSMF…IFLG), and 289–309 (LYLG…MVLW). Residues 29–154 (TLVKAATSKG…LSIIGALVVT (126 aa)) enclose the EamA domain.

The protein belongs to the drug/metabolite transporter (DMT) superfamily. Plant drug/metabolite exporter (P-DME) (TC 2.A.7.4) family.

It is found in the membrane. The protein is WAT1-related protein At5g40210 of Arabidopsis thaliana (Mouse-ear cress).